Consider the following 441-residue polypeptide: S-adenosylmethionine synthase 1 (441 aa).

Glu-9 contributes to the Mg(2+) binding site. His-15 contributes to the ATP binding site. K(+) is bound at residue Glu-43. The L-methionine site is built by Glu-56 and Gln-99. ATP-binding positions include 167 to 169 (DGK), 235 to 238 (SGRF), Asp-246, 252 to 253 (RK), Ala-269, Lys-273, and Lys-277. Asp-246 lines the L-methionine pocket. Position 277 (Lys-277) interacts with L-methionine.

The protein belongs to the AdoMet synthase family. As to quaternary structure, homotetramer. The cofactor is Mn(2+). Requires Mg(2+) as cofactor. It depends on Co(2+) as a cofactor. K(+) is required as a cofactor.

Its subcellular location is the cytoplasm. The enzyme catalyses L-methionine + ATP + H2O = S-adenosyl-L-methionine + phosphate + diphosphate. Its pathway is amino-acid biosynthesis; S-adenosyl-L-methionine biosynthesis; S-adenosyl-L-methionine from L-methionine: step 1/1. Functionally, catalyzes the formation of S-adenosylmethionine from methionine and ATP. The reaction comprises two steps that are both catalyzed by the same enzyme: formation of S-adenosylmethionine (AdoMet) and triphosphate, and subsequent hydrolysis of the triphosphate. The polypeptide is S-adenosylmethionine synthase 1 (SAMS1) (Daucus carota (Wild carrot)).